Here is a 130-residue protein sequence, read N- to C-terminus: uncharacterized protein (130 aa).

The chain crosses the membrane as a helical span at residues 21–43 (VAVCTVAAEVLAIFTLVCTRVFI).

It is found in the membrane. This is an uncharacterized protein from Saccharomyces cerevisiae (strain ATCC 204508 / S288c) (Baker's yeast).